Consider the following 82-residue polypeptide: Small ribosomal subunit protein uS17 (82 aa).

Belongs to the universal ribosomal protein uS17 family. In terms of assembly, part of the 30S ribosomal subunit.

One of the primary rRNA binding proteins, it binds specifically to the 5'-end of 16S ribosomal RNA. The polypeptide is Small ribosomal subunit protein uS17 (Sulfurimonas denitrificans (strain ATCC 33889 / DSM 1251) (Thiomicrospira denitrificans (strain ATCC 33889 / DSM 1251))).